Consider the following 409-residue polypeptide: CUB domain-containing protein (409 aa).

An N-terminal signal peptide occupies residues 1 to 18; the sequence is MFLFSLTVLSALVLITES. A compositionally biased stretch (low complexity) spans 154 to 229; it reads TEASTTAQET…TTAPTTAPAP (76 aa). A disordered region spans residues 154-230; it reads TEASTTAQET…TAPTTAPAPI (77 aa). A disulfide bond links Cys-232 and Cys-257. A CUB domain is found at 232-338; sequence CGGVLRGRGT…QEYVDYYYYD (107 aa). A disordered region spans residues 389–409; sequence VQGAADSESEASASSESSDED. Low complexity predominate over residues 392–409; the sequence is AADSESEASASSESSDED.

As to expression, component of the acid-insoluble and acid-soluble organic matrix of the aragonitic skeleton (at protein level).

It is found in the secreted. In Acropora millepora (Staghorn coral), this protein is CUB domain-containing protein.